Consider the following 156-residue polypeptide: Small ribosomal subunit protein uS7c (156 aa).

It belongs to the universal ribosomal protein uS7 family. Part of the 30S ribosomal subunit.

The protein resides in the plastid. Its subcellular location is the chloroplast. Functionally, one of the primary rRNA binding proteins, it binds directly to 16S rRNA where it nucleates assembly of the head domain of the 30S subunit. In Euglena gracilis, this protein is Small ribosomal subunit protein uS7c (rps7).